The sequence spans 93 residues: Large ribosomal subunit protein bL27 (93 aa).

Residues 1 to 9 (MLRLDLQFF) constitute a propeptide that is removed on maturation.

The protein belongs to the bacterial ribosomal protein bL27 family. In terms of processing, the N-terminus is cleaved by ribosomal processing cysteine protease Prp.

The polypeptide is Large ribosomal subunit protein bL27 (Bacillus licheniformis (strain ATCC 14580 / DSM 13 / JCM 2505 / CCUG 7422 / NBRC 12200 / NCIMB 9375 / NCTC 10341 / NRRL NRS-1264 / Gibson 46)).